A 264-amino-acid polypeptide reads, in one-letter code: V-type proton ATPase subunit D (264 aa).

The span at 214-230 (RDNAETDAQMKAKKAEQ) shows a compositional bias: basic and acidic residues. The segment at 214 to 264 (RDNAETDAQMKAKKAEQQRLALADSENAEGEQTENTPADILAAEEDEDVIF) is disordered. The span at 255–264 (AAEEDEDVIF) shows a compositional bias: acidic residues.

This sequence belongs to the V-ATPase D subunit family. In terms of assembly, V-ATPase is a heteromultimeric enzyme composed of a peripheral catalytic V1 complex (components A to H) attached to an integral membrane V0 proton pore complex (components: a, c, c', c'', d, e, f and VOA1).

Its subcellular location is the vacuole membrane. Its function is as follows. Subunit of the V1 complex of vacuolar(H+)-ATPase (V-ATPase), a multisubunit enzyme composed of a peripheral complex (V1) that hydrolyzes ATP and a membrane integral complex (V0) that translocates protons. V-ATPase is responsible for acidifying and maintaining the pH of intracellular compartments. The polypeptide is V-type proton ATPase subunit D (vma-8) (Neurospora crassa (strain ATCC 24698 / 74-OR23-1A / CBS 708.71 / DSM 1257 / FGSC 987)).